We begin with the raw amino-acid sequence, 334 residues long: Thioredoxin reductase (334 aa).

FAD contacts are provided by residues Ser10 to Ala13, Ile39 to Ala40, Gln44, Asn53, Val86, Cys143, Asp287, and Arg294 to Ala296. Residues Cys140 and Cys143 are joined by a disulfide bond.

It belongs to the class-II pyridine nucleotide-disulfide oxidoreductase family. As to quaternary structure, homodimer. It depends on FAD as a cofactor.

It localises to the cytoplasm. The catalysed reaction is [thioredoxin]-dithiol + NADP(+) = [thioredoxin]-disulfide + NADPH + H(+). The polypeptide is Thioredoxin reductase (cys-9) (Neurospora crassa (strain ATCC 24698 / 74-OR23-1A / CBS 708.71 / DSM 1257 / FGSC 987)).